The sequence spans 374 residues: UDP-N-acetylglucosamine--N-acetylmuramyl-(pentapeptide) pyrophosphoryl-undecaprenol N-acetylglucosamine transferase (374 aa).

UDP-N-acetyl-alpha-D-glucosamine is bound by residues 35–37 (TGG), N144, R185, S211, and Q305.

This sequence belongs to the glycosyltransferase 28 family. MurG subfamily.

The protein resides in the cell inner membrane. The catalysed reaction is di-trans,octa-cis-undecaprenyl diphospho-N-acetyl-alpha-D-muramoyl-L-alanyl-D-glutamyl-meso-2,6-diaminopimeloyl-D-alanyl-D-alanine + UDP-N-acetyl-alpha-D-glucosamine = di-trans,octa-cis-undecaprenyl diphospho-[N-acetyl-alpha-D-glucosaminyl-(1-&gt;4)]-N-acetyl-alpha-D-muramoyl-L-alanyl-D-glutamyl-meso-2,6-diaminopimeloyl-D-alanyl-D-alanine + UDP + H(+). Its pathway is cell wall biogenesis; peptidoglycan biosynthesis. Functionally, cell wall formation. Catalyzes the transfer of a GlcNAc subunit on undecaprenyl-pyrophosphoryl-MurNAc-pentapeptide (lipid intermediate I) to form undecaprenyl-pyrophosphoryl-MurNAc-(pentapeptide)GlcNAc (lipid intermediate II). In Trichodesmium erythraeum (strain IMS101), this protein is UDP-N-acetylglucosamine--N-acetylmuramyl-(pentapeptide) pyrophosphoryl-undecaprenol N-acetylglucosamine transferase.